We begin with the raw amino-acid sequence, 363 residues long: Thioredoxin domain-containing protein C13F5.05, mitochondrial (363 aa).

The N-terminal 24 residues, 1–24 (MLFRIPTLFTLFLACFSLVSGVFG), are a transit peptide targeting the mitochondrion. Residues 32 to 141 (NTIELNSKNF…KSLQKFVSDS (110 aa)) form the Thioredoxin domain.

It is found in the mitochondrion. The sequence is that of Thioredoxin domain-containing protein C13F5.05, mitochondrial from Schizosaccharomyces pombe (strain 972 / ATCC 24843) (Fission yeast).